Reading from the N-terminus, the 296-residue chain is Large ribosomal subunit protein uL18A (296 aa).

Residues 251-296 (PVHEKKPKKEVKKKRWNRAKLSLEQKKDRVAQKKASFLRAQEKADS) form a disordered region. The segment covering 255 to 268 (KKPKKEVKKKRWNR) has biased composition (basic residues). Positions 271–281 (LSLEQKKDRVA) are enriched in basic and acidic residues.

This sequence belongs to the universal ribosomal protein uL18 family. Component of the large ribosomal subunit (LSU). Part of a LSU subcomplex, the 5S RNP which is composed of the 5S RNA, RPL5 and RPL11.

It is found in the cytoplasm. It localises to the nucleus. Its subcellular location is the nucleolus. Its function is as follows. Component of the ribosome, a large ribonucleoprotein complex responsible for the synthesis of proteins in the cell. The small ribosomal subunit (SSU) binds messenger RNAs (mRNAs) and translates the encoded message by selecting cognate aminoacyl-transfer RNA (tRNA) molecules. The large subunit (LSU) contains the ribosomal catalytic site termed the peptidyl transferase center (PTC), which catalyzes the formation of peptide bonds, thereby polymerizing the amino acids delivered by tRNAs into a polypeptide chain. The nascent polypeptides leave the ribosome through a tunnel in the LSU and interact with protein factors that function in enzymatic processing, targeting, and the membrane insertion of nascent chains at the exit of the ribosomal tunnel. As part of the 5S RNP/5S ribonucleoprotein particle it is an essential component of the LSU, required for its formation and the maturation of rRNAs. It also couples ribosome biogenesis to p53/TP53 activation. As part of the 5S RNP it accumulates in the nucleoplasm and inhibits MDM2, when ribosome biogenesis is perturbed, mediating the stabilization and the activation of TP53. In Xenopus laevis (African clawed frog), this protein is Large ribosomal subunit protein uL18A (rpl5-a).